We begin with the raw amino-acid sequence, 273 residues long: 4-hydroxy-tetrahydrodipicolinate reductase (273 aa).

Residues 12 to 17 and E38 each bind NAD(+); that span reads GAGGRM. NADP(+) is bound at residue R39. NAD(+) contacts are provided by residues 102–104 and 126–129; these read GTT and AANF. H159 acts as the Proton donor/acceptor in catalysis. H160 is a (S)-2,3,4,5-tetrahydrodipicolinate binding site. K163 serves as the catalytic Proton donor. 169–170 contacts (S)-2,3,4,5-tetrahydrodipicolinate; the sequence is GT.

Belongs to the DapB family. In terms of assembly, homotetramer.

Its subcellular location is the cytoplasm. It carries out the reaction (S)-2,3,4,5-tetrahydrodipicolinate + NAD(+) + H2O = (2S,4S)-4-hydroxy-2,3,4,5-tetrahydrodipicolinate + NADH + H(+). It catalyses the reaction (S)-2,3,4,5-tetrahydrodipicolinate + NADP(+) + H2O = (2S,4S)-4-hydroxy-2,3,4,5-tetrahydrodipicolinate + NADPH + H(+). It functions in the pathway amino-acid biosynthesis; L-lysine biosynthesis via DAP pathway; (S)-tetrahydrodipicolinate from L-aspartate: step 4/4. Its function is as follows. Catalyzes the conversion of 4-hydroxy-tetrahydrodipicolinate (HTPA) to tetrahydrodipicolinate. The polypeptide is 4-hydroxy-tetrahydrodipicolinate reductase (Shigella flexneri).